Here is a 469-residue protein sequence, read N- to C-terminus: MTAQTLYDKLWNSHVVREEEDGTVLLYIDRHLVHEVTSPQAFEGLKMAGRKLWRIDSVVSTADHNTPTGDWDKGIQDPISKLQVDTLDKNIKEFGALAYFPFMDKGQGIVHVMGPEQGATLPGMTVVCGDSHTSTHGAFGALAHGIGTSEVEHTMATQCITAKKSKSMLIAVDGKLKAGVTAKDVALYIIGQIGTAGGTGYAIEFGGEAIRSLSMEGRMTLCNMAIEAGARSGMVAVDQTTIDYVKDKPFAPEGEAWDKAVEYWRTLVSDEGAVFDKEYRFNAEDIEPQVTWGTSPEMVLDISSKVPNPAEETDPVKRSGMERALEYMGLEAGTPLNEIPVDIVFIGSCTNSRVEDLREAAAIAKDRKKAANVQRVLIVPGSGLVKEQAEKEGLDKIFIEAGFEWREPGCSMCLAMNADRLTPGQRCASTSNRNFEGRQGNGGRTHLVSPAMAAAAAVTGRFTDIRMMA.

[4Fe-4S] cluster-binding residues include Cys349, Cys410, and Cys413.

This sequence belongs to the aconitase/IPM isomerase family. LeuC type 1 subfamily. As to quaternary structure, heterodimer of LeuC and LeuD. [4Fe-4S] cluster is required as a cofactor.

The catalysed reaction is (2R,3S)-3-isopropylmalate = (2S)-2-isopropylmalate. Its pathway is amino-acid biosynthesis; L-leucine biosynthesis; L-leucine from 3-methyl-2-oxobutanoate: step 2/4. In terms of biological role, catalyzes the isomerization between 2-isopropylmalate and 3-isopropylmalate, via the formation of 2-isopropylmaleate. The sequence is that of 3-isopropylmalate dehydratase large subunit from Neisseria meningitidis serogroup A / serotype 4A (strain DSM 15465 / Z2491).